A 1357-amino-acid polypeptide reads, in one-letter code: DNA-directed RNA polymerase subunit beta (1357 aa).

The protein belongs to the RNA polymerase beta chain family. As to quaternary structure, the RNAP catalytic core consists of 2 alpha, 1 beta, 1 beta' and 1 omega subunit. When a sigma factor is associated with the core the holoenzyme is formed, which can initiate transcription.

It carries out the reaction RNA(n) + a ribonucleoside 5'-triphosphate = RNA(n+1) + diphosphate. In terms of biological role, DNA-dependent RNA polymerase catalyzes the transcription of DNA into RNA using the four ribonucleoside triphosphates as substrates. The sequence is that of DNA-directed RNA polymerase subunit beta from Pseudomonas syringae pv. tomato (strain ATCC BAA-871 / DC3000).